The sequence spans 390 residues: Lissencephaly-1 homolog (390 aa).

The LisH domain maps to 7 to 39 (QREEINRAVAEYLQNNGYSEAFNMLLKEASLSE). A coiled-coil region spans residues 54–80 (TTVLRLQRKVNDLEAKLLESQQEINHG). WD repeat units follow at residues 104–145 (GHRL…KTLK), 146–185 (GHTDAVNDIAIDAAGKQLVSCSTDLTIKLWDFGQSYDCLK), 189–228 (GHEHTVSSVTFLPTGDFVLSASRDHTIKQWDISTGYCVFT), 231–270 (GHNDWVRMIRISHDGTLFASGSLDQTVSVWSLPRKQRNWY), 272–313 (EIMS…VIFT), 316–355 (AHENWVRGLAFHPKGKYLVSVADDKMMRIWELSAQRCMKA), and 358–390 (AHEHFVSTVAFHQTNPYVITGSVDMSCKVWECR).

The protein belongs to the WD repeat LIS1/nudF family.

Its subcellular location is the cytoplasm. The protein localises to the cytoskeleton. The protein resides in the microtubule organizing center. It is found in the centrosome. Its function is as follows. Positively regulates the activity of the minus-end directed microtubule motor protein dynein. May enhance dynein-mediated microtubule sliding by targeting dynein to the microtubule plus end. Required for several dynein- and microtubule-dependent processes. The chain is Lissencephaly-1 homolog from Caenorhabditis briggsae.